A 1892-amino-acid polypeptide reads, in one-letter code: Sodium channel protein type 4 subunit alpha A (1892 aa).

At 1 to 125 (MATILPPPGT…RGAIKILIHS (125 aa)) the chain is on the cytoplasmic side. The interval 34-54 (APKAGAHEEEEPPTPNPDLEA) is disordered. The stretch at 107 to 433 (ILSPFSLVRR…VVAMAYDEQN (327 aa)) is one I repeat. Residues 126–144 (LFSTLIMITILSNCVFMTM) form a helical membrane-spanning segment. Residues 145–151 (SNPPAWS) are Extracellular-facing. A helical membrane pass occupies residues 152–172 (KTVEYVFTGIYTFEATVKVLS). Residues 173 to 186 (RGFCVGPFTFLRDP) are Cytoplasmic-facing. A helical membrane pass occupies residues 187–204 (WNWLDFMVISMAYITEFV). Topologically, residues 205 to 210 (DLGNVS) are extracellular. N-linked (GlcNAc...) asparagine glycosylation is present at Asn208. A helical transmembrane segment spans residues 211-227 (ALRTFRVLRALKTITVI). Over 228–246 (PGLKTIVAALIQSVKKMVD) the chain is Cytoplasmic. The helical transmembrane segment at 247–266 (VMILTVFALAVFALVGLQLF) threads the bilayer. Topologically, residues 267–370 (MGNLRHKCIR…PNYGYTSFDS (104 aa)) are extracellular. Cys274 and Cys339 are oxidised to a cystine. N-linked (GlcNAc...) asparagine glycosylation is found at Asn281, Asn294, and Asn341. The cysteines at positions 348 and 354 are disulfide-linked. The pore-forming intramembrane region spans 371-395 (FGWAFLALFRLMTQDNWESLFQLTL). The Extracellular portion of the chain corresponds to 396 to 402 (RAAGQTY). Residues 403-423 (MLFFVVVIFLGSFYLINLILA) traverse the membrane as a helical segment. At 424-612 (VVAMAYDEQN…KWVHFVVMDP (189 aa)) the chain is on the cytoplasmic side. One copy of the II repeat lies at 594–866 (CCEKWVVFKK…QIAIGRITRG (273 aa)). A helical transmembrane segment spans residues 613-631 (FVDLAITICIVLNTLFMAM). Over 632–642 (EHYPMTEEFDY) the chain is Extracellular. A helical membrane pass occupies residues 643–662 (MLSVGNLVFTGIFAAEMFFK). The Cytoplasmic portion of the chain corresponds to 663–676 (LIAMDPYYYFQVGW). A helical membrane pass occupies residues 677–696 (NIFDSIIVTLSLVELGLANV). Residues 697 to 698 (QG) lie on the Extracellular side of the membrane. A helical transmembrane segment spans residues 699 to 716 (LSVLRSFRLLRVFKLAKS). Over 717–732 (WPTLNMLIKIIGNSVG) the chain is Cytoplasmic. Residues 733–751 (ALGNLTLVLAIIVFIFAVV) traverse the membrane as a helical segment. Topologically, residues 752–780 (GMQLFGKSYKDCVCKISSDCELPRWHMND) are extracellular. Cysteines 765 and 771 form a disulfide. Residues 781–801 (FFHSFLIVFRILCGEWIETMW) constitute an intramembrane region (pore-forming). Residues 802-812 (DCMEVAGAGMC) lie on the Extracellular side of the membrane. Residues Cys803 and Cys812 are joined by a disulfide bond. Residues 813 to 831 (LVVFMMVMVIGNLVVLNLF) form a helical membrane-spanning segment. The Cytoplasmic portion of the chain corresponds to 832 to 1071 (LALLLSSFSG…TCFTIVEHDW (240 aa)). 2 disordered regions span residues 884–905 (REPQ…TEGM) and 945–982 (LGES…GVED). A compositionally biased stretch (acidic residues) spans 948-971 (SDSENPSEDDDDQEDDVDSEVTCE). The III repeat unit spans residues 1052-1366 (KGKKWWNLRK…KKYYEAMKKL (315 aa)). The chain crosses the membrane as a helical span at residues 1072–1089 (FETFIIFMILLSSGALAF). Over 1090–1102 (EDIYIERRRTVKI) the chain is Extracellular. The chain crosses the membrane as a helical span at residues 1103–1121 (VLEFADKVFTFIFVIEMLL). The Cytoplasmic segment spans residues 1122 to 1135 (KWVAYGFKTYFTNA). A helical transmembrane segment spans residues 1136–1154 (WCWLDFFIVDISLISLSAN). Residues 1155–1162 (LMGFSDLG) lie on the Extracellular side of the membrane. The helical transmembrane segment at 1163 to 1181 (PIKSLRTLRALRPLRALSR) threads the bilayer. The Cytoplasmic portion of the chain corresponds to 1182 to 1198 (FEGMRVVVNALIGAIPS). The chain crosses the membrane as a helical span at residues 1199-1218 (IFNVLLVCLIFWLIFSIMGV). The Extracellular segment spans residues 1219–1270 (NLFAGKFYRCINTTTAELFPISVVNNKSDCVALQEATQEARWVNVKVNYDNV). A disulfide bond links Cys1228 and Cys1248. Asn1230 and Asn1244 each carry an N-linked (GlcNAc...) asparagine glycan. Residues 1271–1292 (AKGYLSLLQIATFKGWMDIMYP) constitute an intramembrane region (pore-forming). Over 1293–1309 (AVDSREVEEQPSYEINL) the chain is Extracellular. A helical membrane pass occupies residues 1310 to 1331 (YMYIYFVIFIIFGSFFTLNLFI). At 1332–1394 (GVIIDNFNQQ…LVFDFISQQF (63 aa)) the chain is on the cytoplasmic side. The interval 1350–1352 (IFM) is important for rapid channel inactivation. An IV repeat occupies 1375–1673 (IPRPANLIQG…WEKFDTGGTQ (299 aa)). Residues 1395-1412 (FDIFIMVLICLNMVTMMV) form a helical membrane-spanning segment. Residues 1413-1423 (ETDDQSPAKED) lie on the Extracellular side of the membrane. Residues 1424–1442 (FLFKVNVAFIVVFTGECTL) traverse the membrane as a helical segment. Residues 1443–1454 (KLFALRHYFFTN) are Cytoplasmic-facing. A helical membrane pass occupies residues 1455 to 1472 (GWNIFDFIVVILSIAGTM). The Extracellular portion of the chain corresponds to 1473–1485 (LSDIIEKYFVSPT). The helical transmembrane segment at 1486–1502 (LFRVIRLARIGRILRLI) threads the bilayer. Topologically, residues 1503–1521 (KGARGIRTLLFALMMSLPA) are cytoplasmic. The helical transmembrane segment at 1522-1539 (LFNIGLLLFLIMFIFSIF) threads the bilayer. Over 1540–1561 (GMSNFAYVKKEAGINDMFNFET) the chain is Extracellular. Residues 1562 to 1584 (FGSSIICLFQITTSAGWDTLLLP) constitute an intramembrane region (pore-forming). Residues 1585–1614 (MLNKEPPDCDPAFENPGTDVKGNCGNPMMG) are Extracellular-facing. Cys1593 and Cys1608 are joined by a disulfide. The helical transmembrane segment at 1615-1637 (MVFFCSYIIISFLVVVNMYIAII) threads the bilayer. The Cytoplasmic portion of the chain corresponds to 1638–1892 (LENFNVAQEE…TQTILRETNV (255 aa)). The IQ domain maps to 1767-1796 (EDMAAVVIQRAYRNHLHKRGIHHAAYIQRS). Residues 1836–1856 (RRRPDPQTRCSGARCSPEPPE) are disordered.

This sequence belongs to the sodium channel (TC 1.A.1.10) family. Nav1.4/SCN4A subfamily. In terms of assembly, voltage-gated sodium (Nav) channels consist of an ion-conducting alpha subunit which is functional on its own associated with regulatory beta subunits.

It localises to the cell membrane. The catalysed reaction is Na(+)(in) = Na(+)(out). In terms of biological role, pore-forming subunit of a voltage-gated sodium (Nav) channel that directly mediates the depolarizing phase of action potentials in excitable membranes. Navs, also called VGSCs (voltage-gated sodium channels) or VDSCs (voltage-dependent sodium channels), operate by switching between closed and open conformations depending on the voltage difference across the membrane. In the open conformation they allow Na(+) ions to selectively pass through the pore, along their electrochemical gradient. The influx of Na+ ions provokes membrane depolarization, initiating the propagation of electrical signals throughout cells and tissues. The chain is Sodium channel protein type 4 subunit alpha A (scn4aa) from Takifugu rubripes (Japanese pufferfish).